The sequence spans 320 residues: uncharacterized protein (320 aa).

Positions 196–273 are disordered; that stretch reads VVPEYDFDSE…RSKNNSNTTK (78 aa). The segment covering 200 to 210 has biased composition (acidic residues); sequence YDFDSESESDN. Residues 211–226 are compositionally biased toward basic and acidic residues; the sequence is SEEKRFVPVLETEKAP. Over residues 248-273 the composition is skewed to polar residues; that stretch reads QPKNPKQTTLKNTLDTRSKNNSNTTK.

This is an uncharacterized protein from Acanthamoeba polyphaga mimivirus (APMV).